Reading from the N-terminus, the 293-residue chain is Proline iminopeptidase (293 aa).

Ser105 (nucleophile) is an active-site residue. Asp244 is an active-site residue. Residue His271 is the Proton donor of the active site.

This sequence belongs to the peptidase S33 family. Part of the tricorn proteolytic complex.

It catalyses the reaction Release of N-terminal proline from a peptide.. In terms of biological role, cleaves H-Pro-AMC as well as a wide spectrum of amino acid substrates and several peptide substrates without a proline at the N-terminus. Proteases F1, F2 and F3 degrade oligopeptides produced by Tricorn (themselves probably produced by the proteasome) yielding free amino acids. The protein is Proline iminopeptidase (pip) of Thermoplasma acidophilum (strain ATCC 25905 / DSM 1728 / JCM 9062 / NBRC 15155 / AMRC-C165).